The sequence spans 421 residues: Histidine--tRNA ligase (421 aa).

The protein belongs to the class-II aminoacyl-tRNA synthetase family. Homodimer.

The protein resides in the cytoplasm. The catalysed reaction is tRNA(His) + L-histidine + ATP = L-histidyl-tRNA(His) + AMP + diphosphate + H(+). This is Histidine--tRNA ligase from Nitrosomonas eutropha (strain DSM 101675 / C91 / Nm57).